The following is a 235-amino-acid chain: AA9 family lytic polysaccharide monooxygenase D (235 aa).

An N-terminal signal peptide occupies residues 1–18 (MKAFFAVLAVVSAPFVLG). His19 provides a ligand contact to Cu(2+). O-linked (Man...) serine glycosylation occurs at Ser29. Cys61 and Cys181 are oxidised to a cystine. Cu(2+) is bound at residue His94. O2-binding residues include His167 and Gln176. Residue Tyr178 coordinates Cu(2+). A glycan (N-linked (GlcNAc...) asparagine) is linked at Asn221.

This sequence belongs to the polysaccharide monooxygenase AA9 family. Requires Cu(2+) as cofactor.

The protein localises to the secreted. It carries out the reaction [(1-&gt;4)-beta-D-glucosyl]n+m + reduced acceptor + O2 = 4-dehydro-beta-D-glucosyl-[(1-&gt;4)-beta-D-glucosyl]n-1 + [(1-&gt;4)-beta-D-glucosyl]m + acceptor + H2O.. In terms of biological role, lytic polysaccharide monooxygenase (LPMO) that depolymerizes crystalline and amorphous polysaccharides via the oxidation of scissile alpha- or beta-(1-4)-glycosidic bonds, yielding only C1 oxidation products. Catalysis by LPMOs requires the reduction of the active-site copper from Cu(II) to Cu(I) by a reducing agent and H(2)O(2) or O(2) as a cosubstrate. The sequence is that of AA9 family lytic polysaccharide monooxygenase D from Phanerodontia chrysosporium (White-rot fungus).